The primary structure comprises 714 residues: Polyribonucleotide nucleotidyltransferase (714 aa).

The Mg(2+) site is built by aspartate 487 and aspartate 493. Positions proline 554 to isoleucine 613 constitute a KH domain. One can recognise an S1 motif domain in the interval glycine 623–lysine 691.

This sequence belongs to the polyribonucleotide nucleotidyltransferase family. It depends on Mg(2+) as a cofactor.

The protein resides in the cytoplasm. The enzyme catalyses RNA(n+1) + phosphate = RNA(n) + a ribonucleoside 5'-diphosphate. Functionally, involved in mRNA degradation. Catalyzes the phosphorolysis of single-stranded polyribonucleotides processively in the 3'- to 5'-direction. This chain is Polyribonucleotide nucleotidyltransferase, found in Afipia carboxidovorans (strain ATCC 49405 / DSM 1227 / KCTC 32145 / OM5) (Oligotropha carboxidovorans).